Here is a 280-residue protein sequence, read N- to C-terminus: Beta carbonic anhydrase 4 (280 aa).

Alanine 2 carries the N-acetylalanine modification. Positions 47 to 76 (NVAAAKIKALTAELKELDSSNSDAIERIKT) form a coiled coil. A Phosphothreonine modification is found at threonine 57. The residue at position 117 (serine 117) is a Phosphoserine. The residue at position 223 (cysteine 223) is an S-nitrosocysteine.

The protein belongs to the beta-class carbonic anhydrase family. In terms of assembly, interacts with DTX56. In terms of tissue distribution, strongly expressed in aerial tissues including leaves, stems, flowers and siliques. Accumulates in both guard cells and mesophyll cells.

It localises to the cell membrane. It catalyses the reaction hydrogencarbonate + H(+) = CO2 + H2O. Its function is as follows. Reversible hydration of carbon dioxide. Together with BCA1, involved in the CO(2) signaling pathway which controls gas-exchange between plants and the atmosphere by modulating stomatal development and movements. Promotes water use efficiency. This is Beta carbonic anhydrase 4 from Arabidopsis thaliana (Mouse-ear cress).